We begin with the raw amino-acid sequence, 467 residues long: Uronate isomerase (467 aa).

Belongs to the metallo-dependent hydrolases superfamily. Uronate isomerase family.

The enzyme catalyses D-glucuronate = D-fructuronate. It catalyses the reaction aldehydo-D-galacturonate = keto-D-tagaturonate. It functions in the pathway carbohydrate metabolism; pentose and glucuronate interconversion. This chain is Uronate isomerase, found in Staphylococcus haemolyticus (strain JCSC1435).